The following is a 367-amino-acid chain: Ribosomal RNA large subunit methyltransferase M (367 aa).

Residues Ser-188, 221 to 224 (CPGG), Asp-240, Asp-260, and Asp-277 each bind S-adenosyl-L-methionine. Residue Lys-306 is the Proton acceptor of the active site.

The protein belongs to the class I-like SAM-binding methyltransferase superfamily. RNA methyltransferase RlmE family. RlmM subfamily. In terms of assembly, monomer.

It is found in the cytoplasm. It catalyses the reaction cytidine(2498) in 23S rRNA + S-adenosyl-L-methionine = 2'-O-methylcytidine(2498) in 23S rRNA + S-adenosyl-L-homocysteine + H(+). Its function is as follows. Catalyzes the 2'-O-methylation at nucleotide C2498 in 23S rRNA. The chain is Ribosomal RNA large subunit methyltransferase M from Serratia proteamaculans (strain 568).